The sequence spans 209 residues: Response regulator protein VraR (209 aa).

One can recognise a Response regulatory domain in the interval 4–120 (KVLFVDDHEM…DIADAVRKTS (117 aa)). Aspartate 55 carries the post-translational modification 4-aspartylphosphate. In terms of domain architecture, HTH luxR-type spans 141–206 (RAELYEMLTE…QAVIYAFQHN (66 aa)). Residues 165 to 184 (NQEIASASHITIKTVKTHVS) constitute a DNA-binding region (H-T-H motif).

In terms of assembly, homodimer. In terms of processing, phosphorylated by VraS. Phosphorylation state of VraR controls dimerization of the protein.

The protein localises to the cytoplasm. In terms of biological role, member of the two-component regulatory system VraS/VraR involved in the control of the cell wall peptidoglycan biosynthesis. Upon cellular stress, the histidine kinase VraS transfers the phosphoryl group onto VraR. Upon phosphorylation, VraR dimerizes at the N-terminal domain. In turn, phosphorylation-induced dimerization expands and enhances the VraR binding to its own promoter leading to increased expression and subsequent modulation of as many as 40 genes, which ultimately constitute the S.aureus response to cell wall damage. In addition, inhibits the host autophagic flux and delays the early stage of autophagosome formation, thereby promoting bacterial survival. Facilitates the ability of S.aureus to resist host polymorphonuclear leukocytes-mediated phagocytosis and killing thus contributing to immune evasion. This is Response regulator protein VraR (vraR) from Staphylococcus aureus (strain Mu3 / ATCC 700698).